Reading from the N-terminus, the 198-residue chain is MTTIMIAVLAIALLATLFGAILGFASIRFKVEADPIVDQIDAILPQTQCGQCGYPGCRPYAEAIANGDSINKCPPGGQATIEKLADLMGVEAEESAHDLEGKVKKVAFIHEDMCIGCTKCIQACPVDAIVGGTKALHTVIKDECTGCDLCVAPCPTDCIEMIPLETTTETWKWQLNAIPVVNISEANPNSATSRDQNN.

Residues 1–26 (MTTIMIAVLAIALLATLFGAILGFAS) are hydrophobic. The 4Fe-4S domain occupies 32 to 90 (EADPIVDQIDAILPQTQCGQCGYPGCRPYAEAIANGDSINKCPPGGQATIEKLADLMGV). 12 residues coordinate [4Fe-4S] cluster: Cys49, Cys52, Cys57, Cys73, Cys114, Cys117, Cys120, Cys124, Cys144, Cys147, Cys150, and Cys154. 4Fe-4S ferredoxin-type domains lie at 105-134 (KVAF…GGTK) and 135-164 (ALHT…MIPL).

Belongs to the 4Fe4S bacterial-type ferredoxin family. RnfB subfamily. In terms of assembly, the complex is composed of six subunits: RnfA, RnfB, RnfC, RnfD, RnfE and RnfG. [4Fe-4S] cluster is required as a cofactor.

It is found in the cell inner membrane. Part of a membrane-bound complex that couples electron transfer with translocation of ions across the membrane. In Vibrio vulnificus (strain CMCP6), this protein is Ion-translocating oxidoreductase complex subunit B.